Reading from the N-terminus, the 287-residue chain is ATP synthase gamma chain (287 aa).

The protein belongs to the ATPase gamma chain family. F-type ATPases have 2 components, CF(1) - the catalytic core - and CF(0) - the membrane proton channel. CF(1) has five subunits: alpha(3), beta(3), gamma(1), delta(1), epsilon(1). CF(0) has three main subunits: a, b and c.

The protein localises to the cell inner membrane. Produces ATP from ADP in the presence of a proton gradient across the membrane. The gamma chain is believed to be important in regulating ATPase activity and the flow of protons through the CF(0) complex. This chain is ATP synthase gamma chain, found in Photorhabdus laumondii subsp. laumondii (strain DSM 15139 / CIP 105565 / TT01) (Photorhabdus luminescens subsp. laumondii).